Reading from the N-terminus, the 417-residue chain is Testis-specific Y-encoded-like protein 5 (417 aa).

Positions 1-25 are enriched in basic residues; sequence MSGRSRGRKSSRAKNRGKGRAKARV. Disordered stretches follow at residues 1–55, 93–112, 127–202, and 391–417; these read MSGR…QVQA, AAGD…AASL, GTVG…EGSM, and KGKE…SQSN. Basic and acidic residues predominate over residues 27-37; sequence PAPDDAPRDPD. Residues 93 to 103 are compositionally biased toward low complexity; that stretch reads AAGDHGQAAAR. The span at 182–191 shows a compositional bias: basic and acidic residues; it reads GEEKKEERDA. Residues 406 to 417 are compositionally biased toward polar residues; it reads METTQPGVSQSN.

It belongs to the nucleosome assembly protein (NAP) family. Interacts with USP7.

In terms of biological role, involved in modulation of cell growth and cellular response to gamma radiation probably via regulation of the Akt signaling pathway. Involved in regulation of p53/TP53. Suppresses p53/TP53 protein levels and promotes its ubiquitination; the function is dependent on USP7 and independent on MDM2. Proposed to displace p53/TP53 from interaction with USP7. The chain is Testis-specific Y-encoded-like protein 5 (TSPYL5) from Homo sapiens (Human).